The primary structure comprises 316 residues: MEQSFLAYLRGRTRQLPQVAVGIGDDAAVIDWPGSVSSDQPQLRQVACTDQILDGVDFRSEEQSLSDIGFKAMAINLSDIAAMGATPSSALVTLALPAENATEIAGEVYEGILEAAQKYQVAIAGGDLSTYDGPLSISITILGWTEQPWLRTGAEEGDALFVTGALGGSLLGRHLRPEPRVELAAKLKQTVNVHAAIDVSDGFSLDLDRMLAASRMGAELELETLPISEAAHQFAEKSGRTPLEHAWSDGEDFELIFCVAPEEAAIIESTDWGVPVTRVGKVVGRTGLWKRVATSKFERVFPQGFVHGETDVAAAN.

Aspartate 26, threonine 49, and aspartate 50 together coordinate Mg(2+). Residue aspartate 57 participates in substrate binding. Aspartate 79 is a binding site for Mg(2+). ATP-binding positions include tyrosine 109, 126–127 (GD), and arginine 151. Residue aspartate 127 participates in Mg(2+) binding. Residue aspartate 198 participates in Mg(2+) binding. Residue serine 200 coordinates ATP. Aspartate 201 provides a ligand contact to Mg(2+). 2 residues coordinate substrate: glutamate 251 and phenylalanine 305.

Belongs to the thiamine-monophosphate kinase family.

The enzyme catalyses thiamine phosphate + ATP = thiamine diphosphate + ADP. The protein operates within cofactor biosynthesis; thiamine diphosphate biosynthesis; thiamine diphosphate from thiamine phosphate: step 1/1. In terms of biological role, catalyzes the ATP-dependent phosphorylation of thiamine-monophosphate (TMP) to form thiamine-pyrophosphate (TPP), the active form of vitamin B1. This is Thiamine-monophosphate kinase from Rhodopirellula baltica (strain DSM 10527 / NCIMB 13988 / SH1).